A 328-amino-acid polypeptide reads, in one-letter code: Tetraacyldisaccharide 4'-kinase (328 aa).

Position 59 to 66 (59 to 66 (TAGGNGKT)) interacts with ATP.

It belongs to the LpxK family.

The enzyme catalyses a lipid A disaccharide + ATP = a lipid IVA + ADP + H(+). It functions in the pathway glycolipid biosynthesis; lipid IV(A) biosynthesis; lipid IV(A) from (3R)-3-hydroxytetradecanoyl-[acyl-carrier-protein] and UDP-N-acetyl-alpha-D-glucosamine: step 6/6. Transfers the gamma-phosphate of ATP to the 4'-position of a tetraacyldisaccharide 1-phosphate intermediate (termed DS-1-P) to form tetraacyldisaccharide 1,4'-bis-phosphate (lipid IVA). This is Tetraacyldisaccharide 4'-kinase from Aliivibrio fischeri (strain MJ11) (Vibrio fischeri).